The primary structure comprises 403 residues: Enoyl-[acyl-carrier-protein] reductase [NADH] (403 aa).

NAD(+) is bound by residues 49-54 (GASSGY), 75-76 (FE), 112-113 (DA), and 141-142 (LA). Tyrosine 227 serves as a coordination point for substrate. The active-site Proton donor is tyrosine 237. NAD(+) contacts are provided by residues lysine 246 and 276-278 (VVT).

Belongs to the TER reductase family. Monomer.

The catalysed reaction is a 2,3-saturated acyl-[ACP] + NAD(+) = a (2E)-enoyl-[ACP] + NADH + H(+). It participates in lipid metabolism; fatty acid biosynthesis. Involved in the final reduction of the elongation cycle of fatty acid synthesis (FAS II). Catalyzes the reduction of a carbon-carbon double bond in an enoyl moiety that is covalently linked to an acyl carrier protein (ACP). The sequence is that of Enoyl-[acyl-carrier-protein] reductase [NADH] from Pseudomonas putida (strain ATCC 47054 / DSM 6125 / CFBP 8728 / NCIMB 11950 / KT2440).